The chain runs to 182 residues: Glycerol-3-phosphate acyltransferase 1 (182 aa).

5 helical membrane-spanning segments follow: residues Met-5–Val-25, Gly-54–Ala-74, Ser-81–Phe-101, Ile-117–Ile-137, and Ile-157–Leu-177.

The protein belongs to the PlsY family. Probably interacts with PlsX.

It localises to the cell membrane. It catalyses the reaction an acyl phosphate + sn-glycerol 3-phosphate = a 1-acyl-sn-glycero-3-phosphate + phosphate. Its pathway is lipid metabolism; phospholipid metabolism. Functionally, catalyzes the transfer of an acyl group from acyl-phosphate (acyl-PO(4)) to glycerol-3-phosphate (G3P) to form lysophosphatidic acid (LPA). This enzyme utilizes acyl-phosphate as fatty acyl donor, but not acyl-CoA or acyl-ACP. The sequence is that of Glycerol-3-phosphate acyltransferase 1 from Bacillus thuringiensis subsp. konkukian (strain 97-27).